The sequence spans 126 residues: MANLEKIVEDLSTLTVLEAAELAKLLEEKWGVSAAAAVAVAAGPAAGAAAAAPAEEQTEFTVVLAAFGDKKIEVIKEVRAVTGLGLKEAKDLVEAAPKPVKEGVTKEEAEKIKAALEKAGAKVELK.

Belongs to the bacterial ribosomal protein bL12 family. As to quaternary structure, homodimer. Part of the ribosomal stalk of the 50S ribosomal subunit. Forms a multimeric L10(L12)X complex, where L10 forms an elongated spine to which 2 to 4 L12 dimers bind in a sequential fashion. Binds GTP-bound translation factors.

In terms of biological role, forms part of the ribosomal stalk which helps the ribosome interact with GTP-bound translation factors. Is thus essential for accurate translation. This chain is Large ribosomal subunit protein bL12, found in Methylocella silvestris (strain DSM 15510 / CIP 108128 / LMG 27833 / NCIMB 13906 / BL2).